The primary structure comprises 138 residues: uncharacterized protein (138 aa).

Helical transmembrane passes span 8 to 28 (LIIQISIGLSASLILLFAFLP), 47 to 67 (FIICFIARLCFSLSAILTIIV), and 82 to 102 (TLPVLICHGINMLLNLIIAFI).

This sequence to U.parvum UU007, UU008 and UU041.

Its subcellular location is the cell membrane. This is an uncharacterized protein from Ureaplasma parvum serovar 3 (strain ATCC 700970).